A 178-amino-acid chain; its full sequence is 6,7-dimethyl-8-ribityllumazine synthase (178 aa).

5-amino-6-(D-ribitylamino)uracil-binding positions include F23, 61-63 (SFE), and 85-87 (AVI). (2S)-2-hydroxy-3-oxobutyl phosphate is bound at residue 90-91 (QT). The Proton donor role is filled by H93. Y118 serves as a coordination point for 5-amino-6-(D-ribitylamino)uracil. R132 is a binding site for (2S)-2-hydroxy-3-oxobutyl phosphate.

This sequence belongs to the DMRL synthase family.

The enzyme catalyses (2S)-2-hydroxy-3-oxobutyl phosphate + 5-amino-6-(D-ribitylamino)uracil = 6,7-dimethyl-8-(1-D-ribityl)lumazine + phosphate + 2 H2O + H(+). The protein operates within cofactor biosynthesis; riboflavin biosynthesis; riboflavin from 2-hydroxy-3-oxobutyl phosphate and 5-amino-6-(D-ribitylamino)uracil: step 1/2. Catalyzes the formation of 6,7-dimethyl-8-ribityllumazine by condensation of 5-amino-6-(D-ribitylamino)uracil with 3,4-dihydroxy-2-butanone 4-phosphate. This is the penultimate step in the biosynthesis of riboflavin. This Thermosynechococcus vestitus (strain NIES-2133 / IAM M-273 / BP-1) protein is 6,7-dimethyl-8-ribityllumazine synthase.